A 138-amino-acid chain; its full sequence is 10 kDa chaperonin 1, chloroplastic (138 aa).

The N-terminal 61 residues, 1-61, are a transit peptide targeting the chloroplast; the sequence is MASSFITVPK…VPQADRVLVR (61 aa). The cpn-10 domain stretch occupies residues 50-137; sequence KVVPQADRVL…CKESDLLAIV (88 aa).

Belongs to the GroES chaperonin family. In terms of tissue distribution, expressed at low levels in germinating seeds, seedlings, rosettes leaves, flowers and siliques.

The protein localises to the plastid. It localises to the chloroplast. Functions as a co-chaperone for protein folding in chloroplasts. The sequence is that of 10 kDa chaperonin 1, chloroplastic from Arabidopsis thaliana (Mouse-ear cress).